Here is a 34-residue protein sequence, read N- to C-terminus: Photosystem II reaction center protein M (34 aa).

The helical transmembrane segment at 5–25 threads the bilayer; that stretch reads ILAFIAIVLFISVPTAFLLII.

Belongs to the PsbM family. PSII is composed of 1 copy each of membrane proteins PsbA, PsbB, PsbC, PsbD, PsbE, PsbF, PsbH, PsbI, PsbJ, PsbK, PsbL, PsbM, PsbT, PsbX, PsbY, PsbZ, Psb30/Ycf12, at least 3 peripheral proteins of the oxygen-evolving complex and a large number of cofactors. It forms dimeric complexes.

The protein localises to the plastid. It is found in the chloroplast thylakoid membrane. Its function is as follows. One of the components of the core complex of photosystem II (PSII). PSII is a light-driven water:plastoquinone oxidoreductase that uses light energy to abstract electrons from H(2)O, generating O(2) and a proton gradient subsequently used for ATP formation. It consists of a core antenna complex that captures photons, and an electron transfer chain that converts photonic excitation into a charge separation. This subunit is found at the monomer-monomer interface. In Cycas taitungensis (Prince sago), this protein is Photosystem II reaction center protein M.